Reading from the N-terminus, the 161-residue chain is Endoribonuclease YbeY (161 aa).

Residues His-120, His-124, and Asp-130 each contribute to the Zn(2+) site.

Belongs to the endoribonuclease YbeY family. Zn(2+) serves as cofactor.

It is found in the cytoplasm. Functionally, single strand-specific metallo-endoribonuclease involved in late-stage 70S ribosome quality control and in maturation of the 3' terminus of the 16S rRNA. The protein is Endoribonuclease YbeY of Chlamydia trachomatis serovar L2 (strain ATCC VR-902B / DSM 19102 / 434/Bu).